A 342-amino-acid polypeptide reads, in one-letter code: Dihydroorotase (342 aa).

Positions 13 and 15 each coordinate Zn(2+). Residues 15-17 (HLR) and Asn41 contribute to the substrate site. Zn(2+) contacts are provided by Lys98, His135, and His173. Lys98 is subject to N6-carboxylysine. His135 contacts substrate. Leu218 is a binding site for substrate. Position 246 (Asp246) interacts with Zn(2+). Asp246 is a catalytic residue. The substrate site is built by His250 and Ala262.

The protein belongs to the metallo-dependent hydrolases superfamily. DHOase family. Class II DHOase subfamily. Homodimer. It depends on Zn(2+) as a cofactor.

It carries out the reaction (S)-dihydroorotate + H2O = N-carbamoyl-L-aspartate + H(+). The protein operates within pyrimidine metabolism; UMP biosynthesis via de novo pathway; (S)-dihydroorotate from bicarbonate: step 3/3. In terms of biological role, catalyzes the reversible cyclization of carbamoyl aspartate to dihydroorotate. The chain is Dihydroorotase from Vibrio vulnificus (strain YJ016).